A 335-amino-acid chain; its full sequence is Luciferase-like monooxygenase (335 aa).

It to bacterial alkanal monooxygenase alpha and beta chains.

This Escherichia coli O6:H1 (strain CFT073 / ATCC 700928 / UPEC) protein is Luciferase-like monooxygenase (yhbW).